The chain runs to 178 residues: Translation initiation factor IF-3 (178 aa).

This sequence belongs to the IF-3 family. As to quaternary structure, monomer.

Its subcellular location is the cytoplasm. IF-3 binds to the 30S ribosomal subunit and shifts the equilibrium between 70S ribosomes and their 50S and 30S subunits in favor of the free subunits, thus enhancing the availability of 30S subunits on which protein synthesis initiation begins. The polypeptide is Translation initiation factor IF-3 (Legionella pneumophila (strain Paris)).